The following is a 626-amino-acid chain: UvrABC system protein C (626 aa).

The GIY-YIG domain occupies 25-104; it reads TSPGVYRFSN…IKELKPRYNV (80 aa). Residues 218 to 253 form the UVR domain; that stretch reads SALLRDLSAEMQKKAKELKFEEAAALKAQIEGLKRY.

Belongs to the UvrC family. As to quaternary structure, interacts with UvrB in an incision complex.

It localises to the cytoplasm. Its function is as follows. The UvrABC repair system catalyzes the recognition and processing of DNA lesions. UvrC both incises the 5' and 3' sides of the lesion. The N-terminal half is responsible for the 3' incision and the C-terminal half is responsible for the 5' incision. The protein is UvrABC system protein C of Chlorobaculum tepidum (strain ATCC 49652 / DSM 12025 / NBRC 103806 / TLS) (Chlorobium tepidum).